Consider the following 531-residue polypeptide: Peptide chain release factor 3 (531 aa).

Positions 13–282 constitute a tr-type G domain; sequence SKRRTFAIIS…GLTQWAPSPM (270 aa). GTP-binding positions include 22–29, 90–94, and 144–147; these read SHPDAGKT, DTPGH, and NKLD.

Belongs to the TRAFAC class translation factor GTPase superfamily. Classic translation factor GTPase family. PrfC subfamily.

The protein resides in the cytoplasm. Functionally, increases the formation of ribosomal termination complexes and stimulates activities of RF-1 and RF-2. It binds guanine nucleotides and has strong preference for UGA stop codons. It may interact directly with the ribosome. The stimulation of RF-1 and RF-2 is significantly reduced by GTP and GDP, but not by GMP. The sequence is that of Peptide chain release factor 3 from Vibrio cholerae serotype O1 (strain ATCC 39315 / El Tor Inaba N16961).